The primary structure comprises 386 residues: Arginine biosynthesis bifunctional protein ArgJ (386 aa).

Thr148, Lys170, Thr181, Glu261, Asn381, and Ser386 together coordinate substrate. Catalysis depends on Thr181, which acts as the Nucleophile.

Belongs to the ArgJ family. As to quaternary structure, heterotetramer of two alpha and two beta chains.

It localises to the cytoplasm. The enzyme catalyses N(2)-acetyl-L-ornithine + L-glutamate = N-acetyl-L-glutamate + L-ornithine. It carries out the reaction L-glutamate + acetyl-CoA = N-acetyl-L-glutamate + CoA + H(+). The protein operates within amino-acid biosynthesis; L-arginine biosynthesis; L-ornithine and N-acetyl-L-glutamate from L-glutamate and N(2)-acetyl-L-ornithine (cyclic): step 1/1. Its pathway is amino-acid biosynthesis; L-arginine biosynthesis; N(2)-acetyl-L-ornithine from L-glutamate: step 1/4. Its function is as follows. Catalyzes two activities which are involved in the cyclic version of arginine biosynthesis: the synthesis of N-acetylglutamate from glutamate and acetyl-CoA as the acetyl donor, and of ornithine by transacetylation between N(2)-acetylornithine and glutamate. The chain is Arginine biosynthesis bifunctional protein ArgJ from Corynebacterium diphtheriae (strain ATCC 700971 / NCTC 13129 / Biotype gravis).